The sequence spans 97 residues: Aspartyl/glutamyl-tRNA(Asn/Gln) amidotransferase subunit C (97 aa).

It belongs to the GatC family. Heterotrimer of A, B and C subunits.

It carries out the reaction L-glutamyl-tRNA(Gln) + L-glutamine + ATP + H2O = L-glutaminyl-tRNA(Gln) + L-glutamate + ADP + phosphate + H(+). The catalysed reaction is L-aspartyl-tRNA(Asn) + L-glutamine + ATP + H2O = L-asparaginyl-tRNA(Asn) + L-glutamate + ADP + phosphate + 2 H(+). Functionally, allows the formation of correctly charged Asn-tRNA(Asn) or Gln-tRNA(Gln) through the transamidation of misacylated Asp-tRNA(Asn) or Glu-tRNA(Gln) in organisms which lack either or both of asparaginyl-tRNA or glutaminyl-tRNA synthetases. The reaction takes place in the presence of glutamine and ATP through an activated phospho-Asp-tRNA(Asn) or phospho-Glu-tRNA(Gln). The sequence is that of Aspartyl/glutamyl-tRNA(Asn/Gln) amidotransferase subunit C from Thermosynechococcus vestitus (strain NIES-2133 / IAM M-273 / BP-1).